A 520-amino-acid chain; its full sequence is MSAPADTLKSALDRTFASLRHGLETYTAQLTPHEVGTITRVSTGIAMVSGLPGVGFEELVSFSGNVFGIAFNVDETEIGVVLLGDYGHLHAGDPVRRTGRVMDVAVGEGLLGRVIDPLGRPLDSLGPVVSSARLALERPAAPIMDRAPVTVPLQTGLKVVDALIPIGRGQRELILGDRQTGKTAIAVDTILNQRGQDVLCVYCAIGQRAAAVARTIAVLREKGAMEYTVVVVTEGNDPPGLAYIAPYAATSIAEHFMEMGRDVLVVYDDLTQHARAYRELSLLLRRPPGREAFPGDIFYIHSRLLERATHLRPERGGGSLTALPIIETEAQNMSAYIPTNLISITDGQIYLSPSLFELGVLPAVDVSKSVSRVGGKAQRAAYRAVTGDLKLAYAQFEELETFARFGARLDENTQKIIEHGRRIRACLQQPESAPVSMAGQITVLLALTAAFFDGVPLARMTAAEQAVLQAAATLPAELQTRFDTAMKLSEADRATLIQLARDALKPFVPPPAESRRTSAP.

176–183 (GDRQTGKT) provides a ligand contact to ATP.

The protein belongs to the ATPase alpha/beta chains family. As to quaternary structure, F-type ATPases have 2 components, CF(1) - the catalytic core - and CF(0) - the membrane proton channel. CF(1) has five subunits: alpha(3), beta(3), gamma(1), delta(1), epsilon(1). CF(0) has three main subunits: a(1), b(2) and c(9-12). The alpha and beta chains form an alternating ring which encloses part of the gamma chain. CF(1) is attached to CF(0) by a central stalk formed by the gamma and epsilon chains, while a peripheral stalk is formed by the delta and b chains.

The protein localises to the cell inner membrane. The catalysed reaction is ATP + H2O + 4 H(+)(in) = ADP + phosphate + 5 H(+)(out). Produces ATP from ADP in the presence of a proton gradient across the membrane. The alpha chain is a regulatory subunit. This Polaromonas naphthalenivorans (strain CJ2) protein is ATP synthase subunit alpha 2.